A 187-amino-acid chain; its full sequence is Elongation factor P (187 aa).

This sequence belongs to the elongation factor P family.

Its subcellular location is the cytoplasm. Its pathway is protein biosynthesis; polypeptide chain elongation. Functionally, involved in peptide bond synthesis. Stimulates efficient translation and peptide-bond synthesis on native or reconstituted 70S ribosomes in vitro. Probably functions indirectly by altering the affinity of the ribosome for aminoacyl-tRNA, thus increasing their reactivity as acceptors for peptidyl transferase. This Parasynechococcus marenigrum (strain WH8102) protein is Elongation factor P.